The following is a 1394-amino-acid chain: ATP-dependent permease AUS1 (1394 aa).

Over 1 to 420 the chain is Cytoplasmic; it reads MSISKYFTPV…PLTTIGSYSR (420 aa). One can recognise an ABC transporter 1 domain in the interval 33–273; sequence KKSYDAEDSM…FRDTLGIEKD (241 aa). 6 helical membrane passes run 421–443, 468–490, 497–519, 529–551, 558–575, and 636–658; these read GSLT…PIAF, TVFD…YFLA, ARFF…LFAL, VANL…VIYL, FVWI…EAIL, and VWRN…LFAS. Residues 659 to 1080 are Cytoplasmic-facing; that stretch reads QYIKPYFNKD…QYICTKRDMT (422 aa). Positions 751-978 constitute an ABC transporter 2 domain; the sequence is ISWKNINYTV…YFMSHDNTLV (228 aa). 782–789 lines the ATP pocket; the sequence is GESGAGKT. 6 consecutive transmembrane segments (helical) span residues 1081–1103, 1107–1129, 1156–1178, 1193–1215, 1224–1246, and 1346–1368; these read YVMA…FWHI, IIGL…PLIN, VLLL…LFFV, AGVF…LWLI, AAVF…QPYS, and FGIE…YLTY. Residues 1369-1394 are Cytoplasmic-facing; it reads VARIWPKVFKIITKVIPHRGKKPVQN.

Belongs to the ABC transporter superfamily. ABCG family. PDR (TC 3.A.1.205) subfamily.

It is found in the membrane. Functionally, transporter involved in the uptake of sterol. The protein is ATP-dependent permease AUS1 (AUS1) of Saccharomyces cerevisiae (strain ATCC 204508 / S288c) (Baker's yeast).